The chain runs to 439 residues: Enolase 1-1 (439 aa).

T85 bears the Phosphothreonine mark. H159 and E168 together coordinate substrate. The active-site Proton donor is the E211. D246 provides a ligand contact to Mg(2+). Phosphoserine is present on residues S249 and S250. At Y253 the chain carries Phosphotyrosine. The substrate site is built by E295 and D320. E295 and D320 together coordinate Mg(2+). K345 acts as the Proton acceptor in catalysis. S351 carries the post-translational modification Phosphoserine. T353 carries the post-translational modification Phosphothreonine. S355 carries the phosphoserine modification. Substrate contacts are provided by residues 372 to 375 (SHRS) and K396. Phosphoserine is present on S421.

This sequence belongs to the enolase family. Homodimer. It depends on Mg(2+) as a cofactor.

It localises to the cytoplasm. The catalysed reaction is (2R)-2-phosphoglycerate = phosphoenolpyruvate + H2O. It functions in the pathway carbohydrate degradation; glycolysis; pyruvate from D-glyceraldehyde 3-phosphate: step 4/5. The chain is Enolase 1-1 (eno101) from Schizosaccharomyces pombe (strain 972 / ATCC 24843) (Fission yeast).